Here is a 148-residue protein sequence, read N- to C-terminus: 3-hydroxyacyl-[acyl-carrier-protein] dehydratase FabZ (148 aa).

Residue His48 is part of the active site.

The protein belongs to the thioester dehydratase family. FabZ subfamily.

The protein localises to the cytoplasm. The catalysed reaction is a (3R)-hydroxyacyl-[ACP] = a (2E)-enoyl-[ACP] + H2O. Its function is as follows. Involved in unsaturated fatty acids biosynthesis. Catalyzes the dehydration of short chain beta-hydroxyacyl-ACPs and long chain saturated and unsaturated beta-hydroxyacyl-ACPs. The sequence is that of 3-hydroxyacyl-[acyl-carrier-protein] dehydratase FabZ from Campylobacter fetus subsp. fetus (strain 82-40).